The chain runs to 163 residues: Probable ribosome biogenesis protein RLP24 (163 aa).

Belongs to the eukaryotic ribosomal protein eL24 family. As to quaternary structure, associated with nucleolar and cytoplasmic pre-60S particles. At the end of biogenesis it dissociates from cytoplasmic pre-60S particles and is likely to be exchanged for its ribosomal homolog, RPL24.

It is found in the nucleus. The protein resides in the nucleolus. In terms of biological role, involved in the biogenesis of the 60S ribosomal subunit. Ensures the docking of GTPBP4/NOG1 to pre-60S particles. The sequence is that of Probable ribosome biogenesis protein RLP24 (RSL24D1) from Bos taurus (Bovine).